We begin with the raw amino-acid sequence, 189 residues long: Inosine triphosphate pyrophosphatase (189 aa).

14–19 (TGNQNK) lines the ITP pocket. Residue Glu-42 coordinates Mg(2+). Residues Lys-54, 70–71 (DT), Lys-87, 146–149 (FGWD), Lys-167, and 172–173 (HR) contribute to the ITP site.

It belongs to the HAM1 NTPase family. Homodimer. Requires Mg(2+) as cofactor. Mn(2+) is required as a cofactor.

It localises to the cytoplasm. Its subcellular location is the nucleus. The enzyme catalyses ITP + H2O = IMP + diphosphate + H(+). It carries out the reaction dITP + H2O = dIMP + diphosphate + H(+). It catalyses the reaction XTP + H2O = XMP + diphosphate + H(+). Functionally, pyrophosphatase that hydrolyzes non-canonical purine nucleotides such as inosine triphosphate (ITP), deoxyinosine triphosphate (dITP) or xanthosine 5'-triphosphate (XTP) to their respective monophosphate derivatives. The enzyme does not distinguish between the deoxy- and ribose forms. Probably excludes non-canonical purines from RNA and DNA precursor pools, thus preventing their incorporation into RNA and DNA and avoiding chromosomal lesions. The protein is Inosine triphosphate pyrophosphatase of Pyricularia oryzae (strain 70-15 / ATCC MYA-4617 / FGSC 8958) (Rice blast fungus).